The primary structure comprises 25 residues: Ocellatin-L1 (25 aa).

L25 is subject to Leucine amide.

It belongs to the frog skin active peptide (FSAP) family. Ocellatin subfamily. Expressed by the skin glands.

It is found in the secreted. In terms of biological role, antimicrobial peptide with activity against Gram-negative bacteria but without activity against Gram-positive bacteria. Shows a low activity in stimulating insulin release from rat BRIN-BD11 beta cells, and acts without loss of integrity of the plasma membrane. Has very low hemolytic activity. Shows weak amphipathicity in its alpha-helical conformation. The protein is Ocellatin-L1 of Leptodactylus laticeps (Santa Fe frog).